The sequence spans 629 residues: Chaperone protein HtpG (629 aa).

The interval 1–335 (MSSNPTSSVR…TEDLPLNVSR (335 aa)) is a; substrate-binding. The interval 336 to 547 (ELVQASPVMA…KDALDSQFEK (212 aa)) is b. The interval 548-629 (MMKMMNKDAD…NELVEAATRS (82 aa)) is c.

It belongs to the heat shock protein 90 family. In terms of assembly, homodimer.

The protein localises to the cytoplasm. In terms of biological role, molecular chaperone. Has ATPase activity. This is Chaperone protein HtpG from Chlorobaculum tepidum (strain ATCC 49652 / DSM 12025 / NBRC 103806 / TLS) (Chlorobium tepidum).